The primary structure comprises 473 residues: Chromosomal replication initiator protein DnaA (473 aa).

Residues 1–90 (MSSSLWLQCL…KRVTAPKSET (90 aa)) form a domain I, interacts with DnaA modulators region. Positions 91–136 (IAPARTRTAADVAAESSAPAQLQARKPVHNIWRDEEPVAVDLNHRS) are domain II. The segment at 137–353 (NVNPKHKFNN…GALNRVIANA (217 aa)) is domain III, AAA+ region. ATP is bound by residues G181, G183, K184, and T185. The tract at residues 354-473 (NFTGRPITID…YSNLIRTLSS (120 aa)) is domain IV, binds dsDNA.

This sequence belongs to the DnaA family. In terms of assembly, oligomerizes as a right-handed, spiral filament on DNA at oriC.

Its subcellular location is the cytoplasm. Functionally, plays an essential role in the initiation and regulation of chromosomal replication. ATP-DnaA binds to the origin of replication (oriC) to initiate formation of the DNA replication initiation complex once per cell cycle. Binds the DnaA box (a 9 base pair repeat at the origin) and separates the double-stranded (ds)DNA. Forms a right-handed helical filament on oriC DNA; dsDNA binds to the exterior of the filament while single-stranded (ss)DNA is stabiized in the filament's interior. The ATP-DnaA-oriC complex binds and stabilizes one strand of the AT-rich DNA unwinding element (DUE), permitting loading of DNA polymerase. After initiation quickly degrades to an ADP-DnaA complex that is not apt for DNA replication. Binds acidic phospholipids. In Vibrio atlanticus (strain LGP32) (Vibrio splendidus (strain Mel32)), this protein is Chromosomal replication initiator protein DnaA.